The chain runs to 612 residues: Cytokine-like nuclear factor N-PAC (612 aa).

One can recognise a PWWP domain in the interval 22–81; the sequence is PKDLIWAKMKGFTPWPGMIVEPPLDLLTQQRRANTKCVFFFGSRNFAWIEENNIKPFEGP. A disordered region spans residues 168–270; it reads AVEGENNADS…GASSSSPTAR (103 aa). Low complexity-rich tracts occupy residues 177 to 193 and 201 to 220; these read SSAS…TAKS and AKPV…TTKS. Over residues 228 to 240 the composition is skewed to polar residues; it reads AHQTPTGANTSGL. The interval 276–279 is interaction with histone H3; that stretch reads DDLL. The segment at 319–612 is dehydrogenase domain; that stretch reads RDIVPSELTF…SSAVFVRSRF (294 aa). Residues 329–343, Thr421, and Arg564 contribute to the NAD(+) site; that span reads GFLG…IVKD.

This sequence belongs to the HIBADH-related family. NP60 subfamily. Binds to mononucleosomes. Interacts with male-specific lethal (MSL) histone acetyltransferase complex at least composed of mof, msl-1, msl-2 and msl-3.

The protein localises to the chromosome. In terms of biological role, nucleosome-destabilizing factor that is recruited to genes during transcriptional activation and colocalizes with a subset of trimethylated 'Lys-36' histone H3 (H3K36me3)-enriched regions. Binds DNA (in vitro). Facilitates Pol II transcription through nucleosomes. Facilitates male-specific lethal (MSL) histone acetyltransferase complex targeting to active genes on the X chromosome. Stimulates the acetylation of 'Lys-56' of nucleosomal histone H3 (H3K56ac) by nej. This Drosophila pseudoobscura pseudoobscura (Fruit fly) protein is Cytokine-like nuclear factor N-PAC.